The chain runs to 231 residues: ABC transporter ATP-binding protein YtrE (231 aa).

One can recognise an ABC transporter domain in the interval 4-231; sequence VQHIDHSFTI…VLKGGITVEV (228 aa). Residue 42–49 participates in ATP binding; it reads GRSGSGKS.

Belongs to the ABC transporter superfamily. As to quaternary structure, the complex is composed of 2 ATP-binding proteins (YtrB and YtrE), 2 transmembrane proteins (YtrC and YtrD) and a solute-binding protein (YtrF).

The protein localises to the cell membrane. Part of the ABC transporter complex YtrBCDEF that plays a role in acetoin utilization during stationary phase and sporulation. The polypeptide is ABC transporter ATP-binding protein YtrE (ytrE) (Bacillus subtilis (strain 168)).